A 278-amino-acid polypeptide reads, in one-letter code: Achaete-scute homolog 5 (278 aa).

The interval 1–66 is disordered; the sequence is MPMGAAERGA…GPFGGGLALG (66 aa). Positions 155-207 constitute a bHLH domain; sequence AFIQKRNERERQRVKCVNEGYARLRGHLPGALAEKRLSKVETLRAAIRYIKYL. Residues 214-278 are disordered; that stretch reads APDGSTPPAS…PFLESEESWH (65 aa). Positions 230-239 are enriched in pro residues; that stretch reads GPCPAPPATP. Over residues 240–249 the composition is skewed to basic and acidic residues; the sequence is RPDRPGDGEA. The span at 252 to 271 shows a compositional bias: low complexity; it reads PSSLVPESSESSCFSPSPFL.

In terms of assembly, interacts with transcription factor TCF3/E12.

The protein resides in the nucleus. Its function is as follows. Transcription factor. Probably binds E-box motifs 5'-CANNTG-3' in complex with transcription factor TCF3/E12. Negatively modulates transcription of target genes such as CDH1/E-cadherin, perhaps by recruiting the PRC2 repressive complex to regulatory elements. Regulates ameloblast development and tooth germ growth, perhaps acting by positively modulating migration of inner enamel epithelium (IEE) cells. Plays a role in enamel formation. This chain is Achaete-scute homolog 5 (ASCL5), found in Homo sapiens (Human).